The sequence spans 239 residues: Small ribosomal subunit protein uS3 (239 aa).

Residues 39-109 (IRAMIQEIPE…KVQIKIKEVK (71 aa)) enclose the KH type-2 domain. Residues 219-239 (GALLKKQRRPRTEKPAQAGRQ) are disordered.

It belongs to the universal ribosomal protein uS3 family. In terms of assembly, part of the 30S ribosomal subunit. Forms a tight complex with proteins S10 and S14.

Binds the lower part of the 30S subunit head. Binds mRNA in the 70S ribosome, positioning it for translation. In Treponema denticola (strain ATCC 35405 / DSM 14222 / CIP 103919 / JCM 8153 / KCTC 15104), this protein is Small ribosomal subunit protein uS3.